We begin with the raw amino-acid sequence, 227 residues long: MAYPMQLGLQDATSPIMEELLHFHDHTLMIVFLISSLVLYIISLMLTTKLTHTSTMDAQEVETIWTILPAIILIMIALPSLRILYMMDEINNPSLTVKTMGHQWYWSYEYTDYEDLSFDSYMIPTSDLKPGELRLLEVDNRVVLPMEMTVRMLISSEDVLHSWAVPSLGLKTDAVPGRLNQTTLMSTRPGLYYGQCSEICGSNHSFMPIVLELVPLKHFEKWSASML.

Residues 1 to 14 (MAYPMQLGLQDATS) are Mitochondrial intermembrane-facing. A helical membrane pass occupies residues 15–45 (PIMEELLHFHDHTLMIVFLISSLVLYIISLM). The Mitochondrial matrix portion of the chain corresponds to 46–59 (LTTKLTHTSTMDAQ). The chain crosses the membrane as a helical span at residues 60-87 (EVETIWTILPAIILIMIALPSLRILYMM). Residues 88-227 (DEINNPSLTV…HFEKWSASML (140 aa)) are Mitochondrial intermembrane-facing. Cu cation-binding residues include H161, C196, E198, C200, H204, and M207. E198 contributes to the Mg(2+) binding site.

It belongs to the cytochrome c oxidase subunit 2 family. As to quaternary structure, component of the cytochrome c oxidase (complex IV, CIV), a multisubunit enzyme composed of 14 subunits. The complex is composed of a catalytic core of 3 subunits MT-CO1, MT-CO2 and MT-CO3, encoded in the mitochondrial DNA, and 11 supernumerary subunits COX4I, COX5A, COX5B, COX6A, COX6B, COX6C, COX7A, COX7B, COX7C, COX8 and NDUFA4, which are encoded in the nuclear genome. The complex exists as a monomer or a dimer and forms supercomplexes (SCs) in the inner mitochondrial membrane with NADH-ubiquinone oxidoreductase (complex I, CI) and ubiquinol-cytochrome c oxidoreductase (cytochrome b-c1 complex, complex III, CIII), resulting in different assemblies (supercomplex SCI(1)III(2)IV(1) and megacomplex MCI(2)III(2)IV(2)). Found in a complex with TMEM177, COA6, COX18, COX20, SCO1 and SCO2. Interacts with TMEM177 in a COX20-dependent manner. Interacts with COX20. Interacts with COX16. Cu cation serves as cofactor.

It is found in the mitochondrion inner membrane. The catalysed reaction is 4 Fe(II)-[cytochrome c] + O2 + 8 H(+)(in) = 4 Fe(III)-[cytochrome c] + 2 H2O + 4 H(+)(out). Component of the cytochrome c oxidase, the last enzyme in the mitochondrial electron transport chain which drives oxidative phosphorylation. The respiratory chain contains 3 multisubunit complexes succinate dehydrogenase (complex II, CII), ubiquinol-cytochrome c oxidoreductase (cytochrome b-c1 complex, complex III, CIII) and cytochrome c oxidase (complex IV, CIV), that cooperate to transfer electrons derived from NADH and succinate to molecular oxygen, creating an electrochemical gradient over the inner membrane that drives transmembrane transport and the ATP synthase. Cytochrome c oxidase is the component of the respiratory chain that catalyzes the reduction of oxygen to water. Electrons originating from reduced cytochrome c in the intermembrane space (IMS) are transferred via the dinuclear copper A center (CU(A)) of subunit 2 and heme A of subunit 1 to the active site in subunit 1, a binuclear center (BNC) formed by heme A3 and copper B (CU(B)). The BNC reduces molecular oxygen to 2 water molecules using 4 electrons from cytochrome c in the IMS and 4 protons from the mitochondrial matrix. The chain is Cytochrome c oxidase subunit 2 (MT-CO2) from Damaliscus pygargus phillipsi (Blesbok).